Here is a 326-residue protein sequence, read N- to C-terminus: Glyoxalase I (326 aa).

2 consecutive VOC domains span residues 22 to 167 (LLNH…LITY) and 182 to 322 (KFNH…VVPH). His25 contacts Zn(2+). Substrate is bound at residue Arg29. Glu89 is a binding site for Zn(2+). Substrate-binding positions include Asn93, Arg113, His117, and 147–148 (RQ). A Zn(2+)-binding site is contributed by His117. Glu163 contributes to the Zn(2+) binding site. Active-site proton donor/acceptor residues include Glu163 and Glu318.

The protein belongs to the glyoxalase I family. In terms of assembly, monomer. The cofactor is Zn(2+).

The catalysed reaction is (R)-S-lactoylglutathione = methylglyoxal + glutathione. It participates in secondary metabolite metabolism; methylglyoxal degradation; (R)-lactate from methylglyoxal: step 1/2. Its function is as follows. Catalyzes the conversion of hemimercaptal, formed from methylglyoxal and glutathione, to S-lactoylglutathione. Can use gamma-glutamylcysteine as a substrate. The polypeptide is Glyoxalase I (Saccharomyces cerevisiae (strain ATCC 204508 / S288c) (Baker's yeast)).